A 201-amino-acid polypeptide reads, in one-letter code: Phospholipase D (201 aa).

Positions 1–25 (MKRKNKKFTEIFIAFILGIAIGVLG) are cleaved as a signal peptide. Positions 142–169 (VPGIAHNKVIIIDKKKVITGSFNFTAAA) constitute a PLD phosphodiesterase domain. Residues H147, K149, and D154 contribute to the active site.

Belongs to the phospholipase D family. In terms of assembly, homodimer.

Its subcellular location is the secreted. The catalysed reaction is a 1,2-diacyl-sn-glycero-3-phosphocholine + H2O = a 1,2-diacyl-sn-glycero-3-phosphate + choline + H(+). Its function is as follows. Could be a virulence factor. The sequence is that of Phospholipase D (pld) from Rickettsia bellii (strain RML369-C).